Consider the following 159-residue polypeptide: Phosphopantetheine adenylyltransferase (159 aa).

Ser9 contacts substrate. ATP-binding positions include 9 to 10 (SF) and His17. Substrate is bound by residues Lys41, Ile75, and Lys89. ATP is bound by residues 90 to 92 (GLR), Glu100, and 124 to 130 (LEHISSS).

Belongs to the bacterial CoaD family. In terms of assembly, homohexamer. It depends on Mg(2+) as a cofactor.

Its subcellular location is the cytoplasm. The enzyme catalyses (R)-4'-phosphopantetheine + ATP + H(+) = 3'-dephospho-CoA + diphosphate. The protein operates within cofactor biosynthesis; coenzyme A biosynthesis; CoA from (R)-pantothenate: step 4/5. Its function is as follows. Reversibly transfers an adenylyl group from ATP to 4'-phosphopantetheine, yielding dephospho-CoA (dPCoA) and pyrophosphate. The polypeptide is Phosphopantetheine adenylyltransferase (Bifidobacterium animalis subsp. lactis (strain AD011)).